We begin with the raw amino-acid sequence, 71 residues long: Large ribosomal subunit protein bL31 (71 aa).

4 residues coordinate Zn(2+): cysteine 16, cysteine 18, cysteine 37, and cysteine 40.

The protein belongs to the bacterial ribosomal protein bL31 family. Type A subfamily. In terms of assembly, part of the 50S ribosomal subunit. It depends on Zn(2+) as a cofactor.

Binds the 23S rRNA. The sequence is that of Large ribosomal subunit protein bL31 from Pectobacterium atrosepticum (strain SCRI 1043 / ATCC BAA-672) (Erwinia carotovora subsp. atroseptica).